A 213-amino-acid polypeptide reads, in one-letter code: Ras-like protein rasU (213 aa).

GTP is bound at residue 21 to 28 (GDGGVGKT). Residues 43-51 (YDPTIEDLY) carry the Effector region motif. GTP is bound by residues 68–72 (DTAGQ) and 126–129 (NKSD). Cys210 is modified (cysteine methyl ester). Cys210 carries the S-geranylgeranyl cysteine lipid modification. Positions 211–213 (KMI) are cleaved as a propeptide — removed in mature form.

This sequence belongs to the small GTPase superfamily. Ras family.

The protein localises to the cell membrane. It carries out the reaction GTP + H2O = GDP + phosphate + H(+). In terms of biological role, ras proteins bind GDP/GTP and possess intrinsic GTPase activity. The sequence is that of Ras-like protein rasU (rasU) from Dictyostelium discoideum (Social amoeba).